Consider the following 232-residue polypeptide: Nucleoside diphosphate kinase 2, chloroplastic (232 aa).

The transit peptide at 1–79 (MGCLSVVGAS…TRIFLPHLVA (79 aa)) directs the protein to the chloroplast. ATP contacts are provided by Lys-92, Phe-140, Arg-168, Thr-174, Arg-185, and Asn-195. His-198 functions as the Pros-phosphohistidine intermediate in the catalytic mechanism.

The protein belongs to the NDK family. Mg(2+) is required as a cofactor.

Its subcellular location is the plastid. The protein localises to the chloroplast. The catalysed reaction is a 2'-deoxyribonucleoside 5'-diphosphate + ATP = a 2'-deoxyribonucleoside 5'-triphosphate + ADP. The enzyme catalyses a ribonucleoside 5'-diphosphate + ATP = a ribonucleoside 5'-triphosphate + ADP. Functionally, major role in the synthesis of nucleoside triphosphates other than ATP. The ATP gamma phosphate is transferred to the NDP beta phosphate via a ping-pong mechanism, using a phosphorylated active-site intermediate. This Nicotiana tabacum (Common tobacco) protein is Nucleoside diphosphate kinase 2, chloroplastic.